Here is a 470-residue protein sequence, read N- to C-terminus: Acetyl-CoA decarbonylase/synthase complex subunit beta 2 (470 aa).

Cysteine 190, cysteine 193, cysteine 279, and cysteine 281 together coordinate [Ni-Fe-S] cluster.

Belongs to the CdhC family. In terms of assembly, monomer. The ACDS complex is made up of alpha, epsilon, beta, gamma and delta chains with a probable stoichiometry of (alpha(2)epsilon(2))(4)-beta(8)-(gamma(1)delta(1))(8) (Potential). [Ni-Fe-S] cluster is required as a cofactor.

The enzyme catalyses Co(I)-[corrinoid Fe-S protein] + acetyl-CoA + H(+) = methyl-Co(III)-[corrinoid Fe-S protein] + CO + CoA. The protein operates within one-carbon metabolism; methanogenesis from acetate. In terms of biological role, part of a complex that catalyzes the reversible cleavage of acetyl-CoA, allowing growth on acetate as sole source of carbon and energy. The alpha-epsilon complex generates CO from CO(2), while the beta subunit (this protein) combines the CO with CoA and a methyl group to form acetyl-CoA. The methyl group, which is incorporated into acetyl-CoA, is transferred to the beta subunit by a corrinoid iron-sulfur protein (the gamma-delta complex). The chain is Acetyl-CoA decarbonylase/synthase complex subunit beta 2 (cdhC2) from Methanosarcina mazei (strain ATCC BAA-159 / DSM 3647 / Goe1 / Go1 / JCM 11833 / OCM 88) (Methanosarcina frisia).